Reading from the N-terminus, the 350-residue chain is MAALVKFFQHPGVRRFSIFVVLTGVLYLFKSMINLILLTFIFTFLMDRLELVVRQFVSQFFRVSQRVVITFLYMLLAVLLTVGGFVFYPVVAAQIQQLVKQIKHIAYHPDSIPFFDEITSVFGDINISSYVKEGFNVVYTYLADISTFGLQVVMALILSMFFLFEKKRLSEFMAKFKTSKLRVFYEEIAFFGSKFARTFGKVLEAQFIIALVNCILTFIALWIMHFPQLFGLSIMVFFLGLIPVAGVVISLIPLSIIAYSTGGGMYVLYIVLVIFAIHAIETYFLNPKLMSAKTELPIFFTFTVLIFSEHFFGIWGLIIGIPIFVFLLDILDVTNKEDRSKGPRENSDKK.

8 helical membrane passes run 18–38 (IFVV…LILL), 67–87 (VVIT…GFVF), 145–165 (ISTF…FLFE), 207–227 (FIIA…MHFP), 229–249 (LFGL…GVVI), 257–277 (IAYS…IFAI), 289–309 (LMSA…IFSE), and 311–331 (FFGI…LDIL).

This sequence belongs to the autoinducer-2 exporter (AI-2E) (TC 2.A.86) family.

It is found in the cell membrane. This is Putative transport protein YdbI (ydbI) from Bacillus subtilis (strain 168).